The following is a 169-amino-acid chain: Protein UL138 (169 aa).

A helical transmembrane segment spans residues 8–28 (VGLPIIGVMLVLIVAILCYLA). The interval 109-133 (DRRAGSSSSSSVHVANQRNSVPPPD) is disordered.

In terms of assembly, interacts with host TNFR1. Interacts with host MRP1. Interacts with host UAF1/WDR48. Interacts with host STING1.

Its subcellular location is the host Golgi apparatus membrane. In terms of biological role, plays an important role in the establishment of latent viral infection. Modulates the expression of several host cell surface receptors such as TNFR1, CD36 or the MRP1 transporter during productive infection. For instance, associates with host MRP1 and induces its lysosomal degradation. Plays an inhibitory role in the host cGAS/STING/TBK1 pathway and upstream of IRF3 phosphorylation and NF-kappa-B leading to inhibition of interferon beta production during both lytic and latent infections. Also participates in the establishment of latency by sustaining an innate immune response through phosphorylation and activation of host STAT1. The sequence is that of Protein UL138 (UL138) from Human cytomegalovirus (strain Merlin) (HHV-5).